Consider the following 148-residue polypeptide: Ribosomal RNA large subunit methyltransferase H (148 aa).

S-adenosyl-L-methionine is bound by residues Leu-62, Gly-94, and 113–118; that span reads LSLLTL.

Belongs to the RNA methyltransferase RlmH family. As to quaternary structure, homodimer.

Its subcellular location is the cytoplasm. The catalysed reaction is pseudouridine(1915) in 23S rRNA + S-adenosyl-L-methionine = N(3)-methylpseudouridine(1915) in 23S rRNA + S-adenosyl-L-homocysteine + H(+). Functionally, specifically methylates the pseudouridine at position 1915 (m3Psi1915) in 23S rRNA. The polypeptide is Ribosomal RNA large subunit methyltransferase H (Deinococcus geothermalis (strain DSM 11300 / CIP 105573 / AG-3a)).